An 890-amino-acid chain; its full sequence is Pentatricopeptide repeat-containing protein At3g57430, chloroplastic (890 aa).

Residues 1-44 (MSCPLAFTFSLPSIFPFPSQLLPFSRHKHPYLLRATPTSATEDV) constitute a chloroplast transit peptide. PPR repeat units lie at residues 61-95 (SPEW…GIKP), 96-130 (DNYA…GYGV), 132-162 (SVTV…ISER), 163-197 (NQVS…NVEP), 198-231 (SSFT…GLRK), 235-265 (NSFI…FGGR), 266-300 (DLVT…GVEP), 301-335 (DEFT…GSLD), 337-371 (NSFV…KIGL), 372-398 (WNAM…MEES), 404-438 (NSTT…GLDR), 439-473 (DRFV…DLVT), 474-504 (WNTM…ERKV), 516-550 (NSIT…NLAT), 551-581 (DVAV…IPQK), 582-616 (NVIT…GVKP), 617-652 (NEVT…GVEP), and 653-683 (SSDH…MPRD). The type E motif stretch occupies residues 689–764 (AWSSLLGASR…EPGCSWIEHG (76 aa)). The tract at residues 765 to 795 (DEVHKFVAGDSSHPQSEKLSGYLETLWERMR) is type E(+) motif. A type DYW motif region spans residues 796–890 (KEGYVPDTSC…NGTCSCGDYW (95 aa)).

This sequence belongs to the PPR family. PCMP-H subfamily.

It localises to the plastid. It is found in the chloroplast. Involved in RNA editing events in chloroplasts. Required for the editing of a single site in ndhB and ndhF transcripts, which are two plastid-encoded subunits of the chloroplast NAD(P)H dehydrogenase (NDH) complex. Required for the editing of a single site in psbZ. Required for optimal activity of the NDH complex of the photosynthetic electron transport chain. This is Pentatricopeptide repeat-containing protein At3g57430, chloroplastic (PCMP-H81) from Arabidopsis thaliana (Mouse-ear cress).